We begin with the raw amino-acid sequence, 745 residues long: Junction plakoglobin (745 aa).

Position 1 is an N-acetylmethionine (methionine 1). Threonine 14 carries an O-linked (GlcNAc) threonine glycan. Phosphoserine occurs at positions 99 and 125. ARM repeat units lie at residues asparagine 132–lysine 171, lysine 172–histidine 215, arginine 216–leucine 255, glutamate 258–tyrosine 297, glycine 298–cysteine 341, proline 342–aspartate 381, alanine 383–cysteine 420, serine 423–serine 464, glutamate 470–leucine 510, proline 512–threonine 551, proline 574–glutamine 613, and lysine 615–arginine 661. The segment at asparagine 132 to tyrosine 297 is interaction with DSC1 and DSG1. Serine 182 is subject to Phosphoserine. The segment at proline 574–arginine 661 is interaction with DSC1. Serine 665 and serine 730 each carry phosphoserine.

It belongs to the beta-catenin family. Homodimer. Component of an E-cadherin/catenin adhesion complex composed of at least E-cadherin/CDH1 and gamma-catenin/JUP, and possibly alpha-catenin/CTNNA1; the complex is located to adherens junctions. The stable association of CTNNA1 is controversial as CTNNA1 was shown not to bind to F-actin when assembled in the complex. Interacts with MUC1. Interacts with CAV1. Interacts with PTPRJ. Interacts with DSG1. Interacts with DSC1 and DSC2. Interacts with PKP2. Interacts with PKP3 (via N-terminus); the interaction is required for PKP3 localization to desmosome cell-cell junctions. Interacts with DSG4. May be phosphorylated by FER.

It localises to the cell junction. It is found in the adherens junction. Its subcellular location is the desmosome. The protein localises to the cytoplasm. The protein resides in the cytoskeleton. It localises to the cell membrane. It is found in the nucleus. Common junctional plaque protein. The membrane-associated plaques are architectural elements in an important strategic position to influence the arrangement and function of both the cytoskeleton and the cells within the tissue. The presence of plakoglobin in both the desmosomes and in the intermediate junctions suggests that it plays a central role in the structure and function of submembranous plaques. Acts as a substrate for VE-PTP and is required by it to stimulate VE-cadherin function in endothelial cells. Can replace beta-catenin in E-cadherin/catenin adhesion complexes which are proposed to couple cadherins to the actin cytoskeleton. The protein is Junction plakoglobin of Sus scrofa (Pig).